The sequence spans 591 residues: MSIETLLEAARFLEWQAQQQQRAREEQERLRLEREREREQEQKRASNLARLAHALPVEEPRIEAPPLPLSPPAPPPAPPPPLATPAPLTVIPIPVVTNSPQSLPPPPPLPPAAQPLPLAPRQPALVSTPGLSIKEPVTLPTRPQVPTPAPLLPDAKTTVAPTGSPKPLQPLPAPILTIAPHPGVQPQLAPQQPPPPTLGTLKLAPAEEAKSSEQKKRPGGIGTREVHNKLEKNRRAHLKECFETLKRNIPNVDDKKTSNLSVLRTALRYIQSLKRKEKEYEHEMERLAREKIATQQRLAELKHELSQWMDVLEIDRVLRQTGQPEDDQASTSTASEGEDNVDEEMEGDRAGLGPPKLNHRPQPELLKSALPTPSTAPAPLPTHPHPHPHPVALSPAHLPVQQQQPPQQKTPLPAPPPPPATPTQTLVPAPAHLVATAGGGSTVIAHTATTHASVIQTVNHVLQGPGGKHIAHIAPSAPSPAVQLAPATPPIGHITVHPATLNHVAHLGSQLPLYPQPVAVSQPVAVSHIAHTLSHQQVNGTAGLGPPATVMAKPAVGAQVVHHPQLVGQTVLNPVTMVTMPSFPVSTLKLA.

At serine 2 the chain carries N-acetylserine. Disordered stretches follow at residues alanine 17–glutamine 122 and proline 182–threonine 223. Residues arginine 22–arginine 44 are compositionally biased toward basic and acidic residues. Pro residues-rich tracts occupy residues glutamate 63–threonine 84 and serine 102–proline 120. Residues proline 205–lysine 216 are compositionally biased toward basic and acidic residues. Residues glycine 222 to leucine 273 form the bHLH domain. The segment at leucine 273–leucine 301 is leucine-zipper. A disordered region spans residues threonine 321–leucine 426. The segment covering glutamate 336 to glutamate 346 has biased composition (acidic residues). The span at serine 374–histidine 383 shows a compositional bias: pro residues. The segment covering proline 390–proline 411 has biased composition (low complexity). A compositionally biased stretch (pro residues) spans leucine 412 to threonine 421.

Efficient DNA binding requires dimerization with another bHLH protein. Binds DNA as a homodimer or a heterodimer with MAX.

The protein resides in the nucleus. In terms of biological role, binds DNA as a heterodimer with MAX and represses transcription. Binds to the canonical E box sequence 5'-CACGTG-3' and, with higher affinity, to 5'-CACGCG-3'. In Mus musculus (Mouse), this protein is Max-binding protein MNT (Mnt).